A 166-amino-acid chain; its full sequence is uncharacterized protein (166 aa).

A run of 3 helical transmembrane segments spans residues 4–24 (LNIF…EASI), 101–121 (LITC…SEAI), and 146–166 (SWSS…QCFL).

The protein resides in the membrane. This is an uncharacterized protein from Saccharomyces cerevisiae (strain ATCC 204508 / S288c) (Baker's yeast).